The following is a 468-amino-acid chain: MRISQLEGKAVALWGWGREGRAAYRALRARLPTQALTVFCNAEEAREIGALADAALQVETDASAQALGRFEIVVKSPGISPYRAEALAAAAQGTHFIGGTALWFAEHAQADGSVPGVVCITGTKGKSTTTALLAHVLRAAGHRTALVGNIGQPLLEVLAPQPPPAYWAVELSSYQTGDVGRSGARPQLALVLNLFPEHLDWHGDEARYVRDKLSLVTEGRPRIALLNAADPLLAGLQLPDSQVRWFNQPAGWHLRGEVVYRGEQAIFDTADVPLPGEHNRRNLCAVLAAVEALGLDAAALAPAAASFRPLPNRLQLLGSVDGISYVNDSISTTPHASLAALACFARRRVALLVGGHDRGLDWHDFAQQMAQQAPLEIVTMGANGPRIHALLAPLAEAGHFGLHAANDLEHAMGLARNALGEQGGVVLLSPGAPSFGAYSDYVARGRHFAQLAGFDPAAISAIDGLGVH.

Residue 122-128 (GTKGKST) coordinates ATP.

This sequence belongs to the MurCDEF family. MurD2 subfamily.

It localises to the cytoplasm. It carries out the reaction UDP-N-acetyl-alpha-D-muramoyl-L-alanine + L-glutamate + ATP = UDP-N-acetyl-alpha-D-muramoyl-L-alanyl-L-glutamate + ADP + phosphate + H(+). It participates in cell wall biogenesis; peptidoglycan biosynthesis. In terms of biological role, cell wall formation. Catalyzes the addition of L-glutamate to the nucleotide precursor UDP-N-acetylmuramoyl-L-alanine. The protein is UDP-N-acetylmuramoyl-L-alanine--L-glutamate ligase of Xanthomonas axonopodis pv. citri (strain 306).